A 306-amino-acid polypeptide reads, in one-letter code: Pantothenate kinase (306 aa).

91–98 serves as a coordination point for ATP; sequence GSVAVGKS.

It belongs to the prokaryotic pantothenate kinase family.

The protein localises to the cytoplasm. The enzyme catalyses (R)-pantothenate + ATP = (R)-4'-phosphopantothenate + ADP + H(+). The protein operates within cofactor biosynthesis; coenzyme A biosynthesis; CoA from (R)-pantothenate: step 1/5. This chain is Pantothenate kinase, found in Streptococcus mutans serotype c (strain ATCC 700610 / UA159).